The chain runs to 216 residues: Ras-related protein Rab11A (216 aa).

Residues 19-27 (GDSGVGKSN), 38-44 (CLESKST), 67-71 (DTAGQ), 125-128 (NKSD), and 155-157 (SAL) contribute to the GTP site. The Effector region signature appears at 41 to 49 (SKSTIGVEF). 2 S-geranylgeranyl cysteine lipidation sites follow: cysteine 213 and cysteine 214.

It belongs to the small GTPase superfamily. Rab family.

It is found in the cell membrane. The polypeptide is Ras-related protein Rab11A (RAB11A) (Nicotiana tabacum (Common tobacco)).